The chain runs to 193 residues: MRLLEERILADGTVLGETILKVDQFLTHQVDYRLMKEIGRVFADQYADLGITKVVTIEASGIAPAVYTAEALEVPMIFAKKHKNITMTEGILTAEVYSFTKQVTSTVSIAGGLLSKEDRVLIIDDFLANGQAAKGLIDIIHQAGAKAVGIGIVIEKSFQAGRQLLEDLGVEVTSLARIKHFDNGIVSFLEADA.

Residues Leu-20 and Thr-27 each coordinate xanthine. 5-phospho-alpha-D-ribose 1-diphosphate is bound at residue Ala-128–Ala-132. Xanthine is bound at residue Lys-156.

It belongs to the purine/pyrimidine phosphoribosyltransferase family. Xpt subfamily. Homodimer.

It is found in the cytoplasm. The enzyme catalyses XMP + diphosphate = xanthine + 5-phospho-alpha-D-ribose 1-diphosphate. Its pathway is purine metabolism; XMP biosynthesis via salvage pathway; XMP from xanthine: step 1/1. Converts the preformed base xanthine, a product of nucleic acid breakdown, to xanthosine 5'-monophosphate (XMP), so it can be reused for RNA or DNA synthesis. The protein is Xanthine phosphoribosyltransferase of Streptococcus equi subsp. equi (strain 4047).